The primary structure comprises 66 residues: Photosystem II reaction center protein H (66 aa).

The chain crosses the membrane as a helical span at residues 29–49 (PIMGLTMVLFLVFLLIILQIY).

Belongs to the PsbH family. PSII is composed of 1 copy each of membrane proteins PsbA, PsbB, PsbC, PsbD, PsbE, PsbF, PsbH, PsbI, PsbJ, PsbK, PsbL, PsbM, PsbT, PsbX, PsbY, PsbZ, Psb30/Ycf12, at least 3 peripheral proteins of the oxygen-evolving complex and a large number of cofactors. It forms dimeric complexes.

The protein localises to the plastid. The protein resides in the chloroplast thylakoid membrane. One of the components of the core complex of photosystem II (PSII), required for its stability and/or assembly. PSII is a light-driven water:plastoquinone oxidoreductase that uses light energy to abstract electrons from H(2)O, generating O(2) and a proton gradient subsequently used for ATP formation. It consists of a core antenna complex that captures photons, and an electron transfer chain that converts photonic excitation into a charge separation. This is Photosystem II reaction center protein H from Thalassiosira pseudonana (Marine diatom).